The chain runs to 97 residues: Aspartyl/glutamyl-tRNA(Asn/Gln) amidotransferase subunit C (97 aa).

Belongs to the GatC family. Heterotrimer of A, B and C subunits.

The enzyme catalyses L-glutamyl-tRNA(Gln) + L-glutamine + ATP + H2O = L-glutaminyl-tRNA(Gln) + L-glutamate + ADP + phosphate + H(+). The catalysed reaction is L-aspartyl-tRNA(Asn) + L-glutamine + ATP + H2O = L-asparaginyl-tRNA(Asn) + L-glutamate + ADP + phosphate + 2 H(+). Allows the formation of correctly charged Asn-tRNA(Asn) or Gln-tRNA(Gln) through the transamidation of misacylated Asp-tRNA(Asn) or Glu-tRNA(Gln) in organisms which lack either or both of asparaginyl-tRNA or glutaminyl-tRNA synthetases. The reaction takes place in the presence of glutamine and ATP through an activated phospho-Asp-tRNA(Asn) or phospho-Glu-tRNA(Gln). In Prochlorococcus marinus (strain MIT 9301), this protein is Aspartyl/glutamyl-tRNA(Asn/Gln) amidotransferase subunit C.